The primary structure comprises 280 residues: Dexamethasone-induced Ras-related protein 1 (280 aa).

At cysteine 11 the chain carries S-nitrosocysteine. GTP is bound at residue 31-38 (GSSKVGKT). The Effector region signature appears at 53 to 61 (YTPTIEDFH). Residues 78–82 (DTSGN) and 145–148 (NKGD) contribute to the GTP site. Cysteine 277 is subject to Cysteine methyl ester. Residue cysteine 277 is the site of S-farnesyl cysteine attachment. The propeptide at 278–280 (VIS) is removed in mature form.

It belongs to the small GTPase superfamily. RasD family. As to quaternary structure, component of a complex, at least composed of APBB1, RASD1/DEXRAS1 and APP. Interacts with APBB1/FE65. Forms a ternary complex with CAPON and NOS1. In terms of processing, S-nitrosylation stimulates guanine-nucleotide exchange activity. In terms of tissue distribution, expressed in brain, heart, kidney and liver.

The protein resides in the cell membrane. It localises to the cytoplasm. Its subcellular location is the perinuclear region. The protein localises to the nucleus. Small GTPase. Negatively regulates the transcription regulation activity of the APBB1/FE65-APP complex via its interaction with APBB1/FE65. The sequence is that of Dexamethasone-induced Ras-related protein 1 (Rasd1) from Mus musculus (Mouse).